The sequence spans 330 residues: AH receptor-interacting protein (330 aa).

One can recognise a PPIase FKBP-type domain in the interval 31-121 (GTKATFHYRT…KDPLEGQRHC (91 aa)). S43 is subject to Phosphoserine. TPR repeat units lie at residues 179-212 (VPLIHQEGNRLYREGHVKEAAAKYYDAIACLKNL), 231-264 (TPLLLNYCQCKLVVEEYYEVLDHCSSILNKYDDN), and 265-298 (VKAYFKRGKAHAAVWNAQEAQADFAKVLELDPAL).

In terms of assembly, interacts with RET in the pituitary gland; this interaction prevents the formation of the AIP-survivin complex. In terms of tissue distribution, widely expressed. Higher levels seen in the heart, placenta and skeletal muscle. Not expressed in the liver.

It is found in the cytoplasm. Its function is as follows. May play a positive role in AHR-mediated (aromatic hydrocarbon receptor) signaling, possibly by influencing its receptivity for ligand and/or its nuclear targeting. Functionally, cellular negative regulator of the hepatitis B virus (HBV) X protein. The protein is AH receptor-interacting protein (AIP) of Homo sapiens (Human).